The chain runs to 252 residues: Body wall muscle protein HR-29 (252 aa).

Position 2 is an N-acetylserine (Ser-2). Tandem repeats lie at residues 37 to 55, 56 to 74, and 75 to 93. The 3 X 19 AA approximate tandem repeats stretch occupies residues 37–93; it reads RDWMTTPYSSTGIGRRDLSQDWMTTPYTPAGVGRRDLSQDWMTTPYTSKGIGSRNLS. The 112-residue stretch at 138 to 249 folds into the sHSP domain; the sequence is ISVEHEGKTT…KKTAVPVTVE (112 aa).

It belongs to the small heat shock protein (HSP20) family. Exists as an oligomer.

The protein resides in the membrane. Its function is as follows. May be a component of myofibrils where it acts as a stabilizer. The chain is Body wall muscle protein HR-29 from Halocynthia roretzi (Sea squirt).